Here is a 535-residue protein sequence, read N- to C-terminus: BAR/IMD domain-containing adapter protein 2 (535 aa).

The IMD domain maps to 1-250 (MSLSRSEEMH…AQLMQQMANS (250 aa)). Residues 1–251 (MSLSRSEEMH…QLMQQMANSN (251 aa)) are a coiled coil. Ser262, Ser324, Ser326, and Ser337 each carry phosphoserine. A disordered region spans residues 308-370 (SEDYNPWADR…TLPRSSSMAA (63 aa)). A compositionally biased stretch (low complexity) spans 321–335 (QPKSLSPPQSQSKLS). Residue Thr341 is modified to Phosphothreonine. A Phosphoserine modification is found at Ser347. Residues 349–368 (TPKNSYATTENKTLPRSSSM) show a composition bias toward polar residues. Thr361 bears the Phosphothreonine mark. Residues Ser367, Ser385, Ser396, and Ser455 each carry the phosphoserine modification. The 64-residue stretch at 375–438 (NGRMRVKAIF…PFSYTRVLDS (64 aa)) folds into the SH3 domain. The segment at 445 to 486 (HMSLQQGKSSSTGNLLDKDDLALPPPDYGTSSRAFPSQTAGT) is disordered. Composition is skewed to polar residues over residues 447-458 (SLQQGKSSSTGN) and 473-486 (GTSSRAFPSQTAGT).

Homodimer. Interacts with CDC42 and RAC1 that have been activated by GTP binding. Binds TIAM1. Interacts with ATN1, ADGRB1, DIAPH1, EPS8, SHANK1, SHANK2, SHANK3, WASF1 and WASF2. Interacts with ENAH after recruitment of CDC42. In terms of processing, phosphorylated on tyrosine residues by INSR in response to insulin treatment. In terms of tissue distribution, ubiquitous.

Its subcellular location is the cytoplasm. It localises to the membrane. It is found in the cell projection. The protein localises to the filopodium. The protein resides in the ruffle. Its subcellular location is the cytoskeleton. Functionally, adapter protein that links membrane-bound small G-proteins to cytoplasmic effector proteins. Necessary for CDC42-mediated reorganization of the actin cytoskeleton and for RAC1-mediated membrane ruffling. Involved in the regulation of the actin cytoskeleton by WASF family members and the Arp2/3 complex. Plays a role in neurite growth. Acts syngeristically with ENAH to promote filipodia formation. Plays a role in the reorganization of the actin cytoskeleton in response to bacterial infection. Participates in actin bundling when associated with EPS8, promoting filopodial protrusions. This is BAR/IMD domain-containing adapter protein 2 (Baiap2) from Rattus norvegicus (Rat).